The primary structure comprises 122 residues: Large ribosomal subunit protein uL14 (122 aa).

It belongs to the universal ribosomal protein uL14 family. In terms of assembly, part of the 50S ribosomal subunit. Forms a cluster with proteins L3 and L19. In the 70S ribosome, L14 and L19 interact and together make contacts with the 16S rRNA in bridges B5 and B8.

In terms of biological role, binds to 23S rRNA. Forms part of two intersubunit bridges in the 70S ribosome. This is Large ribosomal subunit protein uL14 from Polynucleobacter asymbioticus (strain DSM 18221 / CIP 109841 / QLW-P1DMWA-1) (Polynucleobacter necessarius subsp. asymbioticus).